The primary structure comprises 65 residues: uncharacterized protein (65 aa).

The segment at residues 1–65 is a DNA-binding region (ompR/PhoB-type); that stretch reads MIALSVCWQI…ETGIGYRFML (65 aa).

This is an uncharacterized protein from Escherichia coli (strain K12).